Consider the following 389-residue polypeptide: Major outer membrane porin (389 aa).

Positions 1–22 (MKKLLKSALLFAATGSALSLQA) are cleaved as a signal peptide.

The protein belongs to the chlamydial porin (CP) (TC 1.B.2) family. Part of a disulfide cross-linked outer membrane complex (COMC) composed of the major outer membrane porin (MOMP), the small cysteine-rich protein (OmcA) and the large cysteine-rich periplasmic protein (OmcB).

The protein resides in the cell outer membrane. Functionally, in elementary bodies (EBs, the infectious stage, which is able to survive outside the host cell) provides the structural integrity of the outer envelope through disulfide cross-links with the small cysteine-rich protein and the large cysteine-rich periplasmic protein. It has been described in publications as the Sarkosyl-insoluble COMC (Chlamydia outer membrane complex), and serves as the functional equivalent of peptidoglycan. In terms of biological role, permits diffusion of specific solutes through the outer membrane. The protein is Major outer membrane porin (ompA) of Chlamydia abortus (strain DSM 27085 / S26/3) (Chlamydophila abortus).